Reading from the N-terminus, the 1062-residue chain is Carbamoyl phosphate synthase large chain (1062 aa).

The tract at residues 1–401 (MPKRKDIHKI…AMQKAVRSLE (401 aa)) is carboxyphosphate synthetic domain. ATP-binding residues include Arg-129, Arg-169, Gly-175, Gly-176, Lys-208, Ile-210, Glu-215, Gly-241, Ile-242, His-243, Gln-284, and Glu-298. The region spanning 133–327 (KNLCKELGEP…IAKMAAKIAV (195 aa)) is the ATP-grasp 1 domain. Residues Gln-284, Glu-298, and Asn-300 each coordinate Mg(2+). Gln-284, Glu-298, and Asn-300 together coordinate Mn(2+). The oligomerization domain stretch occupies residues 402 to 546 (IDEKDLYSEE…YSTYDAENES (145 aa)). Residues 547-929 (HRSGKKSVIV…ALYKAFAGAK (383 aa)) are carbamoyl phosphate synthetic domain. The region spanning 671 to 861 (DDIIKELKLN…MAQVATRVIM (191 aa)) is the ATP-grasp 2 domain. Positions 707, 746, 748, 752, 777, 778, 779, 780, 820, and 832 each coordinate ATP. Mg(2+)-binding residues include Gln-820, Glu-832, and Asn-834. Gln-820, Glu-832, and Asn-834 together coordinate Mn(2+). The 133-residue stretch at 930–1062 (MQLPENGNVL…NRSFATDALQ (133 aa)) folds into the MGS-like domain. The interval 930-1062 (MQLPENGNVL…NRSFATDALQ (133 aa)) is allosteric domain.

This sequence belongs to the CarB family. As to quaternary structure, composed of two chains; the small (or glutamine) chain promotes the hydrolysis of glutamine to ammonia, which is used by the large (or ammonia) chain to synthesize carbamoyl phosphate. Tetramer of heterodimers (alpha,beta)4. The cofactor is Mg(2+). It depends on Mn(2+) as a cofactor.

The enzyme catalyses hydrogencarbonate + L-glutamine + 2 ATP + H2O = carbamoyl phosphate + L-glutamate + 2 ADP + phosphate + 2 H(+). It catalyses the reaction hydrogencarbonate + NH4(+) + 2 ATP = carbamoyl phosphate + 2 ADP + phosphate + 2 H(+). Its pathway is amino-acid biosynthesis; L-arginine biosynthesis; carbamoyl phosphate from bicarbonate: step 1/1. It participates in pyrimidine metabolism; UMP biosynthesis via de novo pathway; (S)-dihydroorotate from bicarbonate: step 1/3. Functionally, large subunit of the glutamine-dependent carbamoyl phosphate synthetase (CPSase). CPSase catalyzes the formation of carbamoyl phosphate from the ammonia moiety of glutamine, carbonate, and phosphate donated by ATP, constituting the first step of 2 biosynthetic pathways, one leading to arginine and/or urea and the other to pyrimidine nucleotides. The large subunit (synthetase) binds the substrates ammonia (free or transferred from glutamine from the small subunit), hydrogencarbonate and ATP and carries out an ATP-coupled ligase reaction, activating hydrogencarbonate by forming carboxy phosphate which reacts with ammonia to form carbamoyl phosphate. The sequence is that of Carbamoyl phosphate synthase large chain from Lactobacillus acidophilus (strain ATCC 700396 / NCK56 / N2 / NCFM).